The chain runs to 186 residues: DNA-directed RNA polymerase 22 kDa subunit (186 aa).

The protein belongs to the poxviridae DNA-directed RNA polymerase 22 kDa subunit family. In terms of assembly, the DNA-dependent RNA polymerase used for intermediate and late genes expression consists of eight subunits Rpo30/OPG66, Rpo7/OPG90, Rpo22/OPG103, Rpo147/OPG105, Rpo18/OPG119, Rpo19/OPG131, Rpo132/OPG151 and Rpo35/OPG156. The same holoenzyme, with the addition of the transcription-specificity factor OPG109, is used for early gene expression.

Its subcellular location is the virion. It carries out the reaction RNA(n) + a ribonucleoside 5'-triphosphate = RNA(n+1) + diphosphate. Part of the DNA-dependent RNA polymerase which catalyzes the transcription of viral DNA into RNA using the four ribonucleoside triphosphates as substrates. Responsible for the transcription of early, intermediate and late genes. DNA-dependent RNA polymerase associates with the early transcription factor (ETF), itself composed of OPG118 and OPG133, thereby allowing the early genes transcription. Late transcription, and probably also intermediate transcription, require newly synthesized RNA polymerase. This Vertebrata (FPV) protein is DNA-directed RNA polymerase 22 kDa subunit (OPG103).